A 362-amino-acid polypeptide reads, in one-letter code: Isopentenyl-diphosphate delta-isomerase (362 aa).

Residue 5-6 coordinates substrate; sequence RK. Residues 63 to 65, serine 93, and asparagine 122 each bind FMN; that span reads AMT. Residue glutamine 152 coordinates substrate. Mg(2+) is bound at residue glutamate 153. Residues lysine 184, threonine 214, 259–261, and 280–281 each bind FMN; these read GIR and AG.

Belongs to the IPP isomerase type 2 family. In terms of assembly, homooctamer. Dimer of tetramers. The cofactor is FMN. NADPH serves as cofactor. Requires Mg(2+) as cofactor.

Its subcellular location is the cytoplasm. It carries out the reaction isopentenyl diphosphate = dimethylallyl diphosphate. In terms of biological role, involved in the biosynthesis of isoprenoids. Catalyzes the 1,3-allylic rearrangement of the homoallylic substrate isopentenyl (IPP) to its allylic isomer, dimethylallyl diphosphate (DMAPP). This is Isopentenyl-diphosphate delta-isomerase from Nocardia farcinica (strain IFM 10152).